A 352-amino-acid polypeptide reads, in one-letter code: Alpha-2-HS-glycoprotein (352 aa).

A signal peptide spans 1 to 18 (MKSLVLLLCFAQLWSCQS). The Cystatin fetuin-A-type 1 domain occupies 19–133 (APQGAGLGFR…QFRVLHAQCH (115 aa)). Cystine bridges form between C32/C343, C89/C100, C114/C132, C146/C149, C208/C219, and C230/C247. An N-linked (GlcNAc...) asparagine glycan is attached at N99. At S134 the chain carries Phosphoserine. Position 135 is a phosphothreonine (T135). S138 bears the Phosphoserine mark. The Cystatin fetuin-A-type 2 domain occupies 144–250 (KFCPRCPILI…EEVSVACKLF (107 aa)). N-linked (GlcNAc...) asparagine glycosylation is found at N156 and N176. The segment covering 256 to 273 (PANANPAGPAPTVGQAAP) has biased composition (low complexity). Positions 256–280 (PANANPAGPAPTVGQAAPVAPPAGP) are disordered. S309, S313, S316, and S318 each carry phosphoserine. Residues 319-338 (GEVLHSPKVGQPGDAGAAGP) form a disordered region. Residues 328–338 (GQPGDAGAAGP) show a composition bias toward low complexity.

Belongs to the fetuin family. Undergoes complex post-translational modification involving N-glycosylation, and addition of fucose and sialic acid residues. Phosphorylation occurs at a serine residue. In terms of processing, phosphorylated by FAM20C in the extracellular medium. In terms of tissue distribution, synthesized in liver and secreted by the hepatocytes in the blood.

Its subcellular location is the secreted. Its function is as follows. Could inhibit both insulin-receptor tyrosine kinase activity and insulin-stimulated receptor autophosphorylation and, concomitantly, antagonize the mitogenic effect of the hormone in cultured rat hepatoma cells. The chain is Alpha-2-HS-glycoprotein (Ahsg) from Rattus norvegicus (Rat).